Consider the following 243-residue polypeptide: Leucyl/phenylalanyl-tRNA--protein transferase (243 aa).

The protein belongs to the L/F-transferase family.

It localises to the cytoplasm. The catalysed reaction is N-terminal L-lysyl-[protein] + L-leucyl-tRNA(Leu) = N-terminal L-leucyl-L-lysyl-[protein] + tRNA(Leu) + H(+). It carries out the reaction N-terminal L-arginyl-[protein] + L-leucyl-tRNA(Leu) = N-terminal L-leucyl-L-arginyl-[protein] + tRNA(Leu) + H(+). It catalyses the reaction L-phenylalanyl-tRNA(Phe) + an N-terminal L-alpha-aminoacyl-[protein] = an N-terminal L-phenylalanyl-L-alpha-aminoacyl-[protein] + tRNA(Phe). Its function is as follows. Functions in the N-end rule pathway of protein degradation where it conjugates Leu, Phe and, less efficiently, Met from aminoacyl-tRNAs to the N-termini of proteins containing an N-terminal arginine or lysine. The polypeptide is Leucyl/phenylalanyl-tRNA--protein transferase (Saccharophagus degradans (strain 2-40 / ATCC 43961 / DSM 17024)).